A 363-amino-acid polypeptide reads, in one-letter code: Putative serine/threonine-protein kinase gskl-1 (363 aa).

The region spanning 20-304 (FGAHKLCGSG…AIDVLKMPLF (285 aa)) is the Protein kinase domain. ATP-binding positions include 26-34 (CGSGRFSNV) and K50. D146 (proton acceptor) is an active-site residue. Residues 311–363 (PPKKRSNGVEMPNLASYTEMHHKREPETEVVADIQTTEKAEKESDSTNEELED) form a disordered region. Residues 346-355 (TTEKAEKESD) are compositionally biased toward basic and acidic residues.

The protein belongs to the protein kinase superfamily. Ser/Thr protein kinase family. Expressed during multiple stages of spermatogenesis, in males and hermaphrodites (at protein level).

It localises to the cytoplasm. The protein resides in the cell projection. Its subcellular location is the pseudopodium. The catalysed reaction is L-seryl-[protein] + ATP = O-phospho-L-seryl-[protein] + ADP + H(+). It catalyses the reaction L-threonyl-[protein] + ATP = O-phospho-L-threonyl-[protein] + ADP + H(+). Its function is as follows. May be an autophosphorylating tyrosine kinase, a bifunctional (serine/tyrosine-specific) protein kinase, or a serine kinase that is a substrate for an associated tyrosine kinase. Acting in concert with putative serine/threonine-protein kinase gskl-2, required for sister chromatid segregation and spermatid budding during male meiosis. Plays a role in regulating female meiosis II, together with gskl-2. Involved in sperm pseudopod formation and function, together with gskl-2. The protein is Putative serine/threonine-protein kinase gskl-1 of Caenorhabditis elegans.